The following is a 421-amino-acid chain: 4-hydroxy-3-methylbut-2-en-1-yl diphosphate synthase (flavodoxin) (421 aa).

[4Fe-4S] cluster-binding residues include Cys300, Cys303, Cys346, and Glu353.

It belongs to the IspG family. Requires [4Fe-4S] cluster as cofactor.

The catalysed reaction is (2E)-4-hydroxy-3-methylbut-2-enyl diphosphate + oxidized [flavodoxin] + H2O + 2 H(+) = 2-C-methyl-D-erythritol 2,4-cyclic diphosphate + reduced [flavodoxin]. It functions in the pathway isoprenoid biosynthesis; isopentenyl diphosphate biosynthesis via DXP pathway; isopentenyl diphosphate from 1-deoxy-D-xylulose 5-phosphate: step 5/6. In terms of biological role, converts 2C-methyl-D-erythritol 2,4-cyclodiphosphate (ME-2,4cPP) into 1-hydroxy-2-methyl-2-(E)-butenyl 4-diphosphate. The chain is 4-hydroxy-3-methylbut-2-en-1-yl diphosphate synthase (flavodoxin) from Laribacter hongkongensis (strain HLHK9).